A 495-amino-acid chain; its full sequence is Leucine aminopeptidase 2 (495 aa).

The N-terminal stretch at 1–21 (MKSQLLSLAVAVSTISQGVVG) is a signal peptide. Positions 124-218 (PPANKIMAEL…EDGKNLASLV (95 aa)) constitute a PA domain. Asn-142 and Asn-235 each carry an N-linked (GlcNAc...) asparagine glycan. Residues His-259 and Asp-271 each contribute to the Zn(2+) site. Asn-272 carries N-linked (GlcNAc...) asparagine glycosylation. Glu-303 (proton acceptor) is an active-site residue. Zn(2+)-binding residues include Glu-304 and Asp-332. N-linked (GlcNAc...) asparagine glycosylation is present at Asn-352. Residue His-430 participates in Zn(2+) binding.

This sequence belongs to the peptidase M28 family. M28A subfamily. As to quaternary structure, monomer. Requires Zn(2+) as cofactor.

The protein localises to the secreted. In terms of biological role, extracellular aminopeptidase that releases a wide variety of amino acids from natural peptides and contributes to pathogenicity. In Trichophyton equinum (Horse ringworm fungus), this protein is Leucine aminopeptidase 2 (LAP2).